The primary structure comprises 215 residues: uncharacterized protein (215 aa).

6 helical membrane-spanning segments follow: residues I21–N40, L50–F69, F95–F117, L122–L144, A156–L178, and L183–S205.

This sequence belongs to the CcmB/CycW/HelB family.

The protein resides in the cell membrane. This is an uncharacterized protein from Rickettsia conorii (strain ATCC VR-613 / Malish 7).